Reading from the N-terminus, the 301-residue chain is Ornithine carbamoyltransferase (301 aa).

Carbamoyl phosphate-binding positions include arginine 107 and 134-137 (HPLQ). L-ornithine contacts are provided by residues asparagine 165, aspartate 220, and 224–225 (SM). Residues 260-261 (CL) and arginine 288 contribute to the carbamoyl phosphate site.

The protein belongs to the aspartate/ornithine carbamoyltransferase superfamily. OTCase family. As to quaternary structure, homotrimer.

The protein resides in the cytoplasm. It catalyses the reaction carbamoyl phosphate + L-ornithine = L-citrulline + phosphate + H(+). Its pathway is amino-acid biosynthesis; L-arginine biosynthesis; L-arginine from L-ornithine and carbamoyl phosphate: step 1/3. With respect to regulation, inhibited by delta-N-phosphonoacetyl-L-ornithine. Its function is as follows. Reversibly catalyzes the transfer of the carbamoyl group from carbamoyl phosphate (CP) to the N(epsilon) atom of ornithine (ORN) to produce L-citrulline, which is a substrate for argininosuccinate synthetase, the enzyme involved in the final step in arginine biosynthesis. In Thermus thermophilus (strain ATCC BAA-163 / DSM 7039 / HB27), this protein is Ornithine carbamoyltransferase.